The following is a 217-amino-acid chain: Thymidylate kinase (217 aa).

An ATP-binding site is contributed by 14–21 (GNEGSGKT).

The protein belongs to the thymidylate kinase family.

The catalysed reaction is dTMP + ATP = dTDP + ADP. Phosphorylation of dTMP to form dTDP in both de novo and salvage pathways of dTTP synthesis. The sequence is that of Thymidylate kinase from Orientia tsutsugamushi (strain Ikeda) (Rickettsia tsutsugamushi).